Reading from the N-terminus, the 427-residue chain is 3-phosphoshikimate 1-carboxyvinyltransferase (427 aa).

Lys-23, Ser-24, and Arg-28 together coordinate 3-phosphoshikimate. Lys-23 serves as a coordination point for phosphoenolpyruvate. Residues Gly-97 and Arg-125 each contribute to the phosphoenolpyruvate site. The 3-phosphoshikimate site is built by Ser-170, Ser-171, Gln-172, Ser-198, Asp-314, Asn-337, and Lys-341. Gln-172 is a phosphoenolpyruvate binding site. Catalysis depends on Asp-314, which acts as the Proton acceptor. Phosphoenolpyruvate contacts are provided by Arg-345, Arg-387, and Lys-412.

This sequence belongs to the EPSP synthase family. In terms of assembly, monomer.

The protein resides in the cytoplasm. It carries out the reaction 3-phosphoshikimate + phosphoenolpyruvate = 5-O-(1-carboxyvinyl)-3-phosphoshikimate + phosphate. Its pathway is metabolic intermediate biosynthesis; chorismate biosynthesis; chorismate from D-erythrose 4-phosphate and phosphoenolpyruvate: step 6/7. In terms of biological role, catalyzes the transfer of the enolpyruvyl moiety of phosphoenolpyruvate (PEP) to the 5-hydroxyl of shikimate-3-phosphate (S3P) to produce enolpyruvyl shikimate-3-phosphate and inorganic phosphate. The polypeptide is 3-phosphoshikimate 1-carboxyvinyltransferase (Buchnera aphidicola subsp. Baizongia pistaciae (strain Bp)).